The sequence spans 328 residues: 2,4-dinitroanisole O-demethylase subunit alpha (328 aa).

Positions 1–9 (MSVTSQTSS) are excised as a propeptide. Positions 101, 103, 105, 168, 225, and 247 each coordinate Zn(2+).

This sequence belongs to the metallo-beta-lactamase superfamily. As to quaternary structure, part of the complex DnhAB composed of the 2,4-dinitroanisole O-demethylase alpha (DnhA) and beta (DnhB) subunits. It depends on Zn(2+) as a cofactor.

The enzyme catalyses 2,4-dinitroanisole + H2O = 2,4-dinitrophenol + methanol + H(+). Involved in the degradation of 2,4-dinitroanisole (DNAN), an insensitive munition ingredient used in explosive formulations as a replacement for 2,4,6-trinitrotoluene (TNT). Catalyzes the removal of the methyl group from 2,4-dinitroanisole (DNAN) to yield 2,4-dinitrophenol (2,4-DNP) and methanol. In Nocardioides sp. (strain JS1661), this protein is 2,4-dinitroanisole O-demethylase subunit alpha.